The following is a 329-amino-acid chain: GMP reductase (329 aa).

Cys178 (thioimidate intermediate) is an active-site residue. 207–230 (IIADGGIRNNGDIAKSIRFGATMC) contacts NADP(+).

Belongs to the IMPDH/GMPR family. GuaC type 2 subfamily.

It catalyses the reaction IMP + NH4(+) + NADP(+) = GMP + NADPH + 2 H(+). In terms of biological role, catalyzes the irreversible NADPH-dependent deamination of GMP to IMP. It functions in the conversion of nucleobase, nucleoside and nucleotide derivatives of G to A nucleotides, and in maintaining the intracellular balance of A and G nucleotides. In Lacticaseibacillus casei (strain BL23) (Lactobacillus casei), this protein is GMP reductase.